An 89-amino-acid chain; its full sequence is Small ribosomal subunit protein uS15 (89 aa).

The protein belongs to the universal ribosomal protein uS15 family. As to quaternary structure, part of the 30S ribosomal subunit. Forms a bridge to the 50S subunit in the 70S ribosome, contacting the 23S rRNA.

Functionally, one of the primary rRNA binding proteins, it binds directly to 16S rRNA where it helps nucleate assembly of the platform of the 30S subunit by binding and bridging several RNA helices of the 16S rRNA. Its function is as follows. Forms an intersubunit bridge (bridge B4) with the 23S rRNA of the 50S subunit in the ribosome. The protein is Small ribosomal subunit protein uS15 of Shewanella sp. (strain ANA-3).